A 405-amino-acid chain; its full sequence is S-adenosylmethionine sensor upstream of mTORC1 (405 aa).

Positions 1–34 (MEPGAGGRNTARAQRAGSPNTPPPREQERKLEQE) are disordered. Positions 25-34 (REQERKLEQE) are enriched in basic and acidic residues. S-adenosyl-L-methionine is bound by residues Arg95, Gly172, Asp190, Asp202, Phe203, and Ser244.

This sequence belongs to the BMT2/SAMTOR family. Interacts with the DEPDC5 subunit of the GATOR1 complex; interaction is disrupted when SAMTOR binds S-adenosyl-L-methionine. Interacts with the KICSTOR complex; interaction is disrupted when SAMTOR binds S-adenosyl-L-methionine.

In terms of biological role, S-adenosyl-L-methionine-binding protein that acts as an inhibitor of mTORC1 signaling via interaction with the GATOR1 and KICSTOR complexes. Acts as a sensor of S-adenosyl-L-methionine to signal methionine sufficiency to mTORC1: in presence of methionine, binds S-adenosyl-L-methionine, leading to disrupt interaction with the GATOR1 and KICSTOR complexes and promote mTORC1 signaling. Upon methionine starvation, S-adenosyl-L-methionine levels are reduced, thereby promoting the association with GATOR1 and KICSTOR, leading to inhibit mTORC1 signaling. Probably also acts as a S-adenosyl-L-methionine-dependent methyltransferase (Potential). This chain is S-adenosylmethionine sensor upstream of mTORC1, found in Homo sapiens (Human).